The chain runs to 357 residues: 3-isopropylmalate dehydrogenase (357 aa).

Substrate contacts are provided by Arg97, Arg107, Arg135, and Asp224. Residues Asp224, Asp248, and Asp252 each coordinate Mg(2+). 282-294 is a binding site for NAD(+); sequence GSAPDIAGKNIAN.

Belongs to the isocitrate and isopropylmalate dehydrogenases family. LeuB type 1 subfamily. Homodimer. Requires Mg(2+) as cofactor. The cofactor is Mn(2+).

It localises to the cytoplasm. The catalysed reaction is (2R,3S)-3-isopropylmalate + NAD(+) = 4-methyl-2-oxopentanoate + CO2 + NADH. Its pathway is amino-acid biosynthesis; L-leucine biosynthesis; L-leucine from 3-methyl-2-oxobutanoate: step 3/4. Its function is as follows. Catalyzes the oxidation of 3-carboxy-2-hydroxy-4-methylpentanoate (3-isopropylmalate) to 3-carboxy-4-methyl-2-oxopentanoate. The product decarboxylates to 4-methyl-2 oxopentanoate. The polypeptide is 3-isopropylmalate dehydrogenase (Prochlorococcus marinus subsp. pastoris (strain CCMP1986 / NIES-2087 / MED4)).